The following is a 342-amino-acid chain: Ribosomal RNA small subunit methyltransferase C (342 aa).

It belongs to the methyltransferase superfamily. RsmC family. In terms of assembly, monomer.

It localises to the cytoplasm. The catalysed reaction is guanosine(1207) in 16S rRNA + S-adenosyl-L-methionine = N(2)-methylguanosine(1207) in 16S rRNA + S-adenosyl-L-homocysteine + H(+). Specifically methylates the guanine in position 1207 of 16S rRNA in the 30S particle. The sequence is that of Ribosomal RNA small subunit methyltransferase C from Shewanella sp. (strain MR-4).